Consider the following 560-residue polypeptide: IQ motif and ankyrin repeat domain-containing protein 1 (560 aa).

Residues 1–72 (MDSKKGRPKA…DRAARAIQGA (72 aa)) are disordered. In terms of domain architecture, IQ spans 62 to 91 (EDRAARAIQGAFRQLRARRELARRREERRE). ANK repeat units lie at residues 191-223 (YGNTPLSEAAAGGQPLAIQLRAELGASPNSKGA) and 224-253 (FGPTPLYRAAFGGHLAAVEVLLKLGADPRV). Residues 281-398 (LTEAMLQNME…RLELREQTQE (118 aa)) adopt a coiled-coil conformation.

The chain is IQ motif and ankyrin repeat domain-containing protein 1 from Homo sapiens (Human).